The primary structure comprises 307 residues: Putative lipid kinase SE_0507 (307 aa).

The DAGKc domain occupies 3-139 (QPYNHGVLFY…YDVLKVNDLY (137 aa)). Residues Ser44, 74–80 (GDGTLNE), and Thr101 each bind ATP. Positions 220, 223, and 225 each coordinate Mg(2+). The Proton acceptor role is filled by Glu281.

The protein belongs to the diacylglycerol/lipid kinase family. It depends on Mg(2+) as a cofactor.

Its function is as follows. May catalyze the ATP-dependent phosphorylation of lipids other than diacylglycerol (DAG). This is Putative lipid kinase SE_0507 from Staphylococcus epidermidis (strain ATCC 12228 / FDA PCI 1200).